The primary structure comprises 481 residues: ATP synthase subunit beta (481 aa).

167–174 (GGAGVGKT) contributes to the ATP binding site.

It belongs to the ATPase alpha/beta chains family. As to quaternary structure, F-type ATPases have 2 components, CF(1) - the catalytic core - and CF(0) - the membrane proton channel. CF(1) has five subunits: alpha(3), beta(3), gamma(1), delta(1), epsilon(1). CF(0) has three main subunits: a(1), b(2) and c(9-12). The alpha and beta chains form an alternating ring which encloses part of the gamma chain. CF(1) is attached to CF(0) by a central stalk formed by the gamma and epsilon chains, while a peripheral stalk is formed by the delta and b chains.

It is found in the cell membrane. It carries out the reaction ATP + H2O + 4 H(+)(in) = ADP + phosphate + 5 H(+)(out). Its function is as follows. Produces ATP from ADP in the presence of a proton gradient across the membrane. The catalytic sites are hosted primarily by the beta subunits. This Corynebacterium jeikeium (strain K411) protein is ATP synthase subunit beta.